We begin with the raw amino-acid sequence, 191 residues long: Glutathione S-transferase Y-2 (191 aa).

The GST N-terminal domain maps to 2-80 (TFATVYIKPH…YIVAKGSKPE (79 aa)). In terms of domain architecture, GST C-terminal spans 85–191 (TTEERATNTR…VSQHPIIKNM (107 aa)).

It belongs to the GST superfamily.

The enzyme catalyses RX + glutathione = an S-substituted glutathione + a halide anion + H(+). Conjugation of reduced glutathione to a wide number of exogenous and endogenous hydrophobic electrophiles. This Pichia kudriavzevii (Yeast) protein is Glutathione S-transferase Y-2 (GSTY2).